A 262-amino-acid polypeptide reads, in one-letter code: uncharacterized protein (262 aa).

A divalent metal cation contacts are provided by H7, H9, E98, H138, H162, and D212.

It belongs to the metallo-dependent hydrolases superfamily. TatD-type hydrolase family. A divalent metal cation serves as cofactor.

This is an uncharacterized protein from Haemophilus influenzae (strain ATCC 51907 / DSM 11121 / KW20 / Rd).